We begin with the raw amino-acid sequence, 330 residues long: Ribose-phosphate pyrophosphokinase (330 aa).

Residues Asp-40 to Glu-42 and Arg-99 to Gln-100 contribute to the ATP site. The Mg(2+) site is built by His-133 and Asp-174. Residue Lys-197 is part of the active site. D-ribose 5-phosphate-binding positions include Arg-199, Asp-223, and Asp-227 to Thr-231.

Belongs to the ribose-phosphate pyrophosphokinase family. Class I subfamily. In terms of assembly, homohexamer. Requires Mg(2+) as cofactor.

The protein localises to the cytoplasm. It carries out the reaction D-ribose 5-phosphate + ATP = 5-phospho-alpha-D-ribose 1-diphosphate + AMP + H(+). The protein operates within metabolic intermediate biosynthesis; 5-phospho-alpha-D-ribose 1-diphosphate biosynthesis; 5-phospho-alpha-D-ribose 1-diphosphate from D-ribose 5-phosphate (route I): step 1/1. Its function is as follows. Involved in the biosynthesis of the central metabolite phospho-alpha-D-ribosyl-1-pyrophosphate (PRPP) via the transfer of pyrophosphoryl group from ATP to 1-hydroxyl of ribose-5-phosphate (Rib-5-P). The polypeptide is Ribose-phosphate pyrophosphokinase (Ureaplasma parvum serovar 3 (strain ATCC 700970)).